The sequence spans 139 residues: Small ribosomal subunit protein bS6 (139 aa).

Residues 97 to 139 (TEASPMAKAKDERDSRRSSEGERRSAPAEATEEVKETAEKAAE) are disordered. Residues 104–139 (KAKDERDSRRSSEGERRSAPAEATEEVKETAEKAAE) are compositionally biased toward basic and acidic residues.

It belongs to the bacterial ribosomal protein bS6 family.

Functionally, binds together with bS18 to 16S ribosomal RNA. This is Small ribosomal subunit protein bS6 from Shewanella sediminis (strain HAW-EB3).